The sequence spans 287 residues: Protease HtpX (287 aa).

Helical transmembrane passes span 4–24 and 33–53; these read IFLL…VMSI and GGLL…SLAI. Residue His139 coordinates Zn(2+). Glu140 is an active-site residue. His143 contributes to the Zn(2+) binding site. 2 helical membrane-spanning segments follow: residues 154–174 and 195–215; these read LIQG…AGII and AVVF…VAYF. Residue Glu220 participates in Zn(2+) binding.

This sequence belongs to the peptidase M48B family. It depends on Zn(2+) as a cofactor.

Its subcellular location is the cell inner membrane. The chain is Protease HtpX from Shewanella oneidensis (strain ATCC 700550 / JCM 31522 / CIP 106686 / LMG 19005 / NCIMB 14063 / MR-1).